A 289-amino-acid chain; its full sequence is Extracellular ribonuclease (289 aa).

The first 24 residues, 1–24 (MTKKLWFLPIVCLFFILGWTAPSA), serve as a signal peptide directing secretion. Residues 25–51 (SAGAPADTNLYSRLAVSTAGGTTLFPQ) constitute a propeptide that is removed on maturation. A disordered region spans residues 177-197 (FDNGGSEYPKAPGNYYDGDSW).

The protein localises to the secreted. In terms of biological role, mg(2+)-activated ribonuclease which hydrolyzes RNA apparently nonspecifically into oligonucleotides with 5'-terminal phosphate. This is Extracellular ribonuclease (bsn) from Bacillus amyloliquefaciens (Bacillus velezensis).